The chain runs to 184 residues: Oligoribonuclease (184 aa).

The Exonuclease domain occupies 8 to 169 (LIWIDLEMTG…EDIHESIIEL (162 aa)). Y129 is a catalytic residue.

Belongs to the oligoribonuclease family.

The protein localises to the cytoplasm. In terms of biological role, 3'-to-5' exoribonuclease specific for small oligoribonucleotides. In Buchnera aphidicola subsp. Schizaphis graminum (strain Sg), this protein is Oligoribonuclease.